We begin with the raw amino-acid sequence, 311 residues long: Coproporphyrin III ferrochelatase 1 (311 aa).

Fe-coproporphyrin III is bound by residues tyrosine 12, arginine 29, 45 to 46 (RY), serine 53, and tyrosine 124. Histidine 182 and glutamate 263 together coordinate Fe(2+).

This sequence belongs to the ferrochelatase family.

Its subcellular location is the cytoplasm. It catalyses the reaction Fe-coproporphyrin III + 2 H(+) = coproporphyrin III + Fe(2+). It functions in the pathway porphyrin-containing compound metabolism; protoheme biosynthesis. Its function is as follows. Involved in coproporphyrin-dependent heme b biosynthesis. Catalyzes the insertion of ferrous iron into coproporphyrin III to form Fe-coproporphyrin III. This is Coproporphyrin III ferrochelatase 1 from Bacillus cereus (strain ATCC 10987 / NRS 248).